The primary structure comprises 287 residues: Ribosomal RNA small subunit methyltransferase I (287 aa).

This sequence belongs to the methyltransferase superfamily. RsmI family.

The protein localises to the cytoplasm. The catalysed reaction is cytidine(1402) in 16S rRNA + S-adenosyl-L-methionine = 2'-O-methylcytidine(1402) in 16S rRNA + S-adenosyl-L-homocysteine + H(+). In terms of biological role, catalyzes the 2'-O-methylation of the ribose of cytidine 1402 (C1402) in 16S rRNA. In Streptococcus pyogenes serotype M3 (strain ATCC BAA-595 / MGAS315), this protein is Ribosomal RNA small subunit methyltransferase I.